The chain runs to 427 residues: Putative tyrosine recombinase XerC (427 aa).

In terms of domain architecture, Core-binding (CB) spans 1–81; it reads MTPQQLTEEY…HLRTIWGYAI (81 aa). One can recognise a Tyr recombinase domain in the interval 116-305; that stretch reads RARSWLSMQV…DYDHMRAVLH (190 aa). Active-site residues include R156, K183, H256, R259, and H283. The O-(3'-phospho-DNA)-tyrosine intermediate role is filled by Y292. Disordered regions lie at residues 323–384 and 401–427; these read SGSP…PPDT and RAAT…DSLA. Over residues 350–362 the composition is skewed to basic and acidic residues; it reads ARTEPSEPREHTQ. Low complexity predominate over residues 402-413; sequence AATASAVPAATS.

This sequence belongs to the 'phage' integrase family.

The protein resides in the cytoplasm. Functionally, site-specific tyrosine recombinase, which acts by catalyzing the cutting and rejoining of the recombining DNA molecules. This chain is Putative tyrosine recombinase XerC, found in Pseudomonas aeruginosa.